The chain runs to 284 residues: D-tagatose-1,6-bisphosphate aldolase subunit GatY (284 aa).

Catalysis depends on Asp82, which acts as the Proton donor. Positions 83 and 180 each coordinate Zn(2+). Gly181 lines the dihydroxyacetone phosphate pocket. His208 serves as a coordination point for Zn(2+). Residues 209 to 211 and 230 to 233 each bind dihydroxyacetone phosphate; these read GAS and NVAT.

This sequence belongs to the class II fructose-bisphosphate aldolase family. TagBP aldolase GatY subfamily. As to quaternary structure, forms a complex with GatZ. Zn(2+) is required as a cofactor.

It catalyses the reaction D-tagatofuranose 1,6-bisphosphate = D-glyceraldehyde 3-phosphate + dihydroxyacetone phosphate. The protein operates within carbohydrate metabolism; D-tagatose 6-phosphate degradation; D-glyceraldehyde 3-phosphate and glycerone phosphate from D-tagatose 6-phosphate: step 2/2. Catalytic subunit of the tagatose-1,6-bisphosphate aldolase GatYZ, which catalyzes the reversible aldol condensation of dihydroxyacetone phosphate (DHAP or glycerone-phosphate) with glyceraldehyde 3-phosphate (G3P) to produce tagatose 1,6-bisphosphate (TBP). Requires GatZ subunit for full activity and stability. Is involved in the catabolism of galactitol. In Salmonella newport (strain SL254), this protein is D-tagatose-1,6-bisphosphate aldolase subunit GatY.